We begin with the raw amino-acid sequence, 460 residues long: Cysteine--tRNA ligase (460 aa).

Residue Cys28 participates in Zn(2+) binding. The 'HIGH' region signature appears at 30 to 40 (MTVYDYCHLGH). Zn(2+) contacts are provided by Cys209, His234, and Glu238. The 'KMSKS' region motif lies at 266–270 (KMSKS). Lys269 lines the ATP pocket.

The protein belongs to the class-I aminoacyl-tRNA synthetase family. As to quaternary structure, monomer. It depends on Zn(2+) as a cofactor.

The protein localises to the cytoplasm. It catalyses the reaction tRNA(Cys) + L-cysteine + ATP = L-cysteinyl-tRNA(Cys) + AMP + diphosphate. The protein is Cysteine--tRNA ligase of Thioalkalivibrio sulfidiphilus (strain HL-EbGR7).